A 947-amino-acid chain; its full sequence is Protein NETWORKED 2D (947 aa).

In terms of domain architecture, NAB spans 10-90 (YSWWWASHIR…ERYDHISTEL (81 aa)). Coiled-coil stretches lie at residues 176-205 (KPEA…SSYE), 247-342 (MTET…HFES), and 375-433 (TALI…VLDK). Disordered regions lie at residues 455-555 (NLHE…DKTD) and 580-620 (EKQG…GEPD). Basic and acidic residues predominate over residues 474-514 (PQKDLEGEKRTLDISEEIKEHQKETGEEKKEAPVKSVKFEQ). The segment covering 525–536 (TIPSTNPDTVLE) has biased composition (polar residues). Basic and acidic residues-rich tracts occupy residues 537–555 (STEK…DKTD), 580–589 (EKQGESDKID), and 610–620 (EDQKEKEGEPD). Coiled-coil stretches lie at residues 645 to 684 (RNFK…LLQK) and 744 to 773 (GQIQ…DGSS).

Belongs to the NET family.

Its function is as follows. Plant-specific actin binding protein. May be part of a membrane-cytoskeletal adapter complex. This chain is Protein NETWORKED 2D, found in Arabidopsis thaliana (Mouse-ear cress).